The primary structure comprises 334 residues: Holliday junction branch migration complex subunit RuvB (334 aa).

The large ATPase domain (RuvB-L) stretch occupies residues alanine 4–tyrosine 184. Residues isoleucine 23, arginine 24, glycine 65, lysine 68, threonine 69, threonine 70, glutamate 131–tyrosine 133, arginine 174, tyrosine 184, and arginine 221 contribute to the ATP site. Threonine 69 contacts Mg(2+). Residues glutamine 185–asparagine 255 are small ATPAse domain (RuvB-S). The segment at alanine 258–glutamate 334 is head domain (RuvB-H). Arginine 294, arginine 313, and arginine 318 together coordinate DNA.

It belongs to the RuvB family. As to quaternary structure, homohexamer. Forms an RuvA(8)-RuvB(12)-Holliday junction (HJ) complex. HJ DNA is sandwiched between 2 RuvA tetramers; dsDNA enters through RuvA and exits via RuvB. An RuvB hexamer assembles on each DNA strand where it exits the tetramer. Each RuvB hexamer is contacted by two RuvA subunits (via domain III) on 2 adjacent RuvB subunits; this complex drives branch migration. In the full resolvosome a probable DNA-RuvA(4)-RuvB(12)-RuvC(2) complex forms which resolves the HJ.

The protein resides in the cytoplasm. It catalyses the reaction ATP + H2O = ADP + phosphate + H(+). Functionally, the RuvA-RuvB-RuvC complex processes Holliday junction (HJ) DNA during genetic recombination and DNA repair, while the RuvA-RuvB complex plays an important role in the rescue of blocked DNA replication forks via replication fork reversal (RFR). RuvA specifically binds to HJ cruciform DNA, conferring on it an open structure. The RuvB hexamer acts as an ATP-dependent pump, pulling dsDNA into and through the RuvAB complex. RuvB forms 2 homohexamers on either side of HJ DNA bound by 1 or 2 RuvA tetramers; 4 subunits per hexamer contact DNA at a time. Coordinated motions by a converter formed by DNA-disengaged RuvB subunits stimulates ATP hydrolysis and nucleotide exchange. Immobilization of the converter enables RuvB to convert the ATP-contained energy into a lever motion, pulling 2 nucleotides of DNA out of the RuvA tetramer per ATP hydrolyzed, thus driving DNA branch migration. The RuvB motors rotate together with the DNA substrate, which together with the progressing nucleotide cycle form the mechanistic basis for DNA recombination by continuous HJ branch migration. Branch migration allows RuvC to scan DNA until it finds its consensus sequence, where it cleaves and resolves cruciform DNA. This chain is Holliday junction branch migration complex subunit RuvB, found in Yersinia enterocolitica serotype O:8 / biotype 1B (strain NCTC 13174 / 8081).